The chain runs to 96 residues: MRPYEIMVILDPTLDECTVGPSLETFLNVVRKDGGAIDKVDIWGRRRLAYEISKHAEGIYVVIDLKAAPATVSELDRQLSLNESVLRTKVMRTDKH.

It belongs to the bacterial ribosomal protein bS6 family.

Binds together with bS18 to 16S ribosomal RNA. This is Small ribosomal subunit protein bS6 (rpsF) from Mycobacterium leprae (strain TN).